The primary structure comprises 431 residues: UDP-N-acetylmuramate--L-alanine ligase (431 aa).

Residue 108-114 (GAHGKST) participates in ATP binding.

It belongs to the MurCDEF family.

The protein resides in the cytoplasm. The catalysed reaction is UDP-N-acetyl-alpha-D-muramate + L-alanine + ATP = UDP-N-acetyl-alpha-D-muramoyl-L-alanine + ADP + phosphate + H(+). It participates in cell wall biogenesis; peptidoglycan biosynthesis. Functionally, cell wall formation. This is UDP-N-acetylmuramate--L-alanine ligase from Campylobacter jejuni (strain RM1221).